The primary structure comprises 628 residues: ATP-dependent RNA helicase mrh4, mitochondrial (628 aa).

The transit peptide at 1-40 (MSLAVRPPVCLLCRSGAPTLLPSSVSQVARSMATARLRRK) directs the protein to the mitochondrion. The tract at residues 51–109 (AKSSINQKRSGKAKFGPWSGMNQTEAHIRGEPRSRSQAALRRSGEKAADTPRKSDSPLY) is disordered. The segment covering 92-105 (RSGEKAADTPRKSD) has biased composition (basic and acidic residues). The Q motif signature appears at 137–170 (TSFDHFPLLPVVRHSIFSQALPGLVDVTPTPIQR). The Helicase ATP-binding domain occupies 190 to 402 (EDGDPQYDQY…RKRYPDIKRL (213 aa)). 203-210 (AETGSGKT) is an ATP binding site. The span at 228–253 (DKENERKEEERKAKEKEERLKNRAFD) shows a compositional bias: basic and acidic residues. The tract at residues 228-260 (DKENERKEEERKAKEKEERLKNRAFDLEPEEPP) is disordered. The DEAD box motif lies at 349 to 352 (DEAD). In terms of domain architecture, Helicase C-terminal spans 456 to 628 (YVGPNIKKIL…EGMFRGQALI (173 aa)).

The protein belongs to the DEAD box helicase family. MRH4 subfamily.

Its subcellular location is the mitochondrion. It catalyses the reaction ATP + H2O = ADP + phosphate + H(+). In terms of biological role, ATP-binding RNA helicase involved in mitochondrial RNA metabolism. Required for maintenance of mitochondrial DNA. The sequence is that of ATP-dependent RNA helicase mrh4, mitochondrial (mrh4) from Aspergillus oryzae (strain ATCC 42149 / RIB 40) (Yellow koji mold).